Here is a 276-residue protein sequence, read N- to C-terminus: Tryptophan synthase alpha chain (276 aa).

Catalysis depends on proton acceptor residues glutamate 46 and glutamate 57.

It belongs to the TrpA family. As to quaternary structure, tetramer of two alpha and two beta chains.

It catalyses the reaction (1S,2R)-1-C-(indol-3-yl)glycerol 3-phosphate + L-serine = D-glyceraldehyde 3-phosphate + L-tryptophan + H2O. It participates in amino-acid biosynthesis; L-tryptophan biosynthesis; L-tryptophan from chorismate: step 5/5. The alpha subunit is responsible for the aldol cleavage of indoleglycerol phosphate to indole and glyceraldehyde 3-phosphate. The sequence is that of Tryptophan synthase alpha chain from Halobacterium salinarum (strain ATCC 29341 / DSM 671 / R1).